The chain runs to 289 residues: 4-hydroxy-tetrahydrodipicolinate synthase (289 aa).

Residue threonine 43 coordinates pyruvate. The Proton donor/acceptor role is filled by tyrosine 131. Lysine 160 (schiff-base intermediate with substrate) is an active-site residue. Position 200 (valine 200) interacts with pyruvate.

Belongs to the DapA family. As to quaternary structure, homotetramer; dimer of dimers.

It is found in the cytoplasm. It carries out the reaction L-aspartate 4-semialdehyde + pyruvate = (2S,4S)-4-hydroxy-2,3,4,5-tetrahydrodipicolinate + H2O + H(+). It participates in amino-acid biosynthesis; L-lysine biosynthesis via DAP pathway; (S)-tetrahydrodipicolinate from L-aspartate: step 3/4. Functionally, catalyzes the condensation of (S)-aspartate-beta-semialdehyde [(S)-ASA] and pyruvate to 4-hydroxy-tetrahydrodipicolinate (HTPA). The polypeptide is 4-hydroxy-tetrahydrodipicolinate synthase (Methanococcus maripaludis (strain C5 / ATCC BAA-1333)).